Here is a 337-residue protein sequence, read N- to C-terminus: Protein ABHD13 (337 aa).

Residues 37–57 (FHLYGGIVLLLLIFVSIAGIL) traverse the membrane as a helical; Signal-anchor for type II membrane protein segment. Catalysis depends on charge relay system residues Ser-193, Asp-268, and His-298. Asn-299 carries an N-linked (GlcNAc...) asparagine glycan.

The protein belongs to the serine esterase family.

It is found in the membrane. This is Protein ABHD13 from Mus musculus (Mouse).